A 575-amino-acid polypeptide reads, in one-letter code: uncharacterized protein (575 aa).

Helical transmembrane passes span 16-36 (FFLD…FPLI), 50-70 (WGLI…SSAL), 132-152 (PEDL…MLFI), 154-174 (WQLA…ALYF), 243-263 (ISYM…TWFV), and 264-284 (IRGS…NVLF). The ABC transmembrane type-1 domain occupies 16 to 299 (FFLDFFSAIA…INAIIEMYPR (284 aa)). An ABC transporter domain is found at 333–567 (IRYKHVSFGY…GGLYSRLHQA (235 aa)). Position 366 to 373 (366 to 373 (GPSGAGKS)) interacts with ATP.

Belongs to the ABC transporter superfamily.

The protein localises to the cell membrane. It is found in the membrane raft. This is an uncharacterized protein from Bacillus subtilis (strain 168).